Here is a 227-residue protein sequence, read N- to C-terminus: Large ribosomal subunit protein uL3 (227 aa).

Q158 carries the post-translational modification N5-methylglutamine.

This sequence belongs to the universal ribosomal protein uL3 family. As to quaternary structure, part of the 50S ribosomal subunit. Forms a cluster with proteins L14 and L19. In terms of processing, methylated by PrmB.

Functionally, one of the primary rRNA binding proteins, it binds directly near the 3'-end of the 23S rRNA, where it nucleates assembly of the 50S subunit. This chain is Large ribosomal subunit protein uL3, found in Polaromonas sp. (strain JS666 / ATCC BAA-500).